The following is a 412-amino-acid chain: CapZ-interacting protein (412 aa).

Disordered stretches follow at residues 1–84 and 99–412; these read MEER…KSSP and ALLP…DTRM. Over residues 7-20 the composition is skewed to polar residues; the sequence is ETNSNVDSSAQPSV. A phosphoserine mark is found at Ser-68, Ser-82, Ser-83, Ser-105, Ser-108, Ser-116, Ser-120, and Ser-123. A Phosphothreonine modification is found at Thr-124. A phosphoserine mark is found at Ser-126, Ser-127, Ser-135, and Ser-143. The segment covering 159–176 has biased composition (basic residues); the sequence is VRTRGSIKRRPPSRRFRR. Phosphoserine is present on residues Ser-177, Ser-179, and Ser-216. A phosphothreonine mark is found at Thr-243 and Thr-256. Over residues 248–258 the composition is skewed to basic and acidic residues; it reads EKPEELVRTPE. Ser-297 is subject to Phosphoserine. Composition is skewed to basic and acidic residues over residues 298-312 and 319-330; these read PREE…DTGK and SEERVADEDRLG. Phosphoserine occurs at positions 333 and 401.

In terms of assembly, interacts with CAPZA2 and CAPZB. Dephosphorylation results in its dissociation from CAPZA2.

In terms of biological role, stress-induced phosphorylation of CAPZIP may regulate the ability of F-actin-capping protein to remodel actin filament assembly. The sequence is that of CapZ-interacting protein (Rcsd1) from Mus musculus (Mouse).